The following is a 601-amino-acid chain: RNA-binding protein MEX3B (601 aa).

Disordered regions lie at residues 1–39 (MPSSLFADLERNGSGGGGGGGGGGGGGGSGGGETLDDQR) and 90–109 (GRQGGSGRDGDRRGFSISPT). Ser-4 bears the Phosphoserine mark. The segment covering 13–33 (GSGGGGGGGGGGGGGGSGGGE) has biased composition (gly residues). KH domains follow at residues 98-159 (DGDR…RREI) and 192-253 (QTTI…REEI). Disordered stretches follow at residues 284–332 (LHHG…TDSY) and 344–448 (TSRL…GGAS). Position 320 is a phosphoserine (Ser-320). 2 stretches are compositionally biased toward low complexity: residues 320–331 (SSSSLGSASTDS) and 362–371 (NGNNNNNGNG). Residues 395–404 (DPAPAPPPGT) are compositionally biased toward pro residues. A compositionally biased stretch (low complexity) spans 420 to 442 (AAPVSSSCSSSASSSASSSSVVF). Ser-494 is subject to Phosphoserine. Positions 514–546 (LPGLPSSDTSGSSSSSSSSSSSSSSSSGLRRKG) are disordered. Low complexity predominate over residues 519-540 (SSDTSGSSSSSSSSSSSSSSSS). The segment at 550–590 (CSVCFESEVIAALVPCGHNLFCMECANRICEKSEPECPVCH) adopts an RING-type zinc-finger fold.

In terms of processing, phosphorylation at Ser-494 creates a docking site for 14-3-3, which stabilizes the protein and modulates its ability to bind RNA.

It is found in the cytoplasm. The protein localises to the nucleus. The protein resides in the P-body. It localises to the cytoplasmic granule. In terms of biological role, RNA-binding protein. May be involved in post-transcriptional regulatory mechanisms. In Mus musculus (Mouse), this protein is RNA-binding protein MEX3B (Mex3b).